The sequence spans 545 residues: Esterase-5C (545 aa).

The first 19 residues, 1–19 (MLAARLIILLSFYWLSASA), serve as a signal peptide directing secretion. Cysteines 84 and 103 form a disulfide. A glycan (N-linked (GlcNAc...) asparagine) is linked at Asn113. Residue Ser207 is the Acyl-ester intermediate of the active site. The cysteines at positions 259 and 271 are disulfide-linked. Residue Asn421 is glycosylated (N-linked (GlcNAc...) asparagine). His467 serves as the catalytic Charge relay system. Asn507 is a glycosylation site (N-linked (GlcNAc...) asparagine). A disulfide bond links Cys515 and Cys536.

Belongs to the type-B carboxylesterase/lipase family.

Its subcellular location is the secreted. The enzyme catalyses a carboxylic ester + H2O = an alcohol + a carboxylate + H(+). This is Esterase-5C (Est-5C) from Drosophila pseudoobscura pseudoobscura (Fruit fly).